Consider the following 250-residue polypeptide: Bacteriorhodopsin-I (250 aa).

Transmembrane regions (helical) follow at residues 7–27 (EGIW…YFIA), 42–62 (IATI…ALGF), 81–101 (YTDW…LAGA), 114–134 (VLMI…VLSA), 139–159 (LVWW…LFSS), 185–205 (VWLV…LVGI), and 207–227 (IETA…GIIL). The residue at position 220 (Lys220) is an N6-(retinylidene)lysine.

The protein belongs to the archaeal/bacterial/fungal opsin family. Post-translationally, the covalent binding of retinal to the apoprotein, bacterioopsin, generates bacteriorhodopsin.

The protein localises to the membrane. In terms of biological role, light-driven proton pump. This chain is Bacteriorhodopsin-I (bop), found in Haloarcula marismortui (strain ATCC 43049 / DSM 3752 / JCM 8966 / VKM B-1809) (Halobacterium marismortui).